The sequence spans 159 residues: Phosphopantetheine adenylyltransferase (159 aa).

Substrate is bound at residue threonine 10. ATP contacts are provided by residues 10–11 and histidine 18; that span reads TF. Substrate contacts are provided by lysine 42, leucine 74, and arginine 88. Residues 89 to 91, glutamate 99, and 124 to 130 each bind ATP; these read GLR and NSFISST.

This sequence belongs to the bacterial CoaD family. Homohexamer. Requires Mg(2+) as cofactor.

It localises to the cytoplasm. The catalysed reaction is (R)-4'-phosphopantetheine + ATP + H(+) = 3'-dephospho-CoA + diphosphate. Its pathway is cofactor biosynthesis; coenzyme A biosynthesis; CoA from (R)-pantothenate: step 4/5. Functionally, reversibly transfers an adenylyl group from ATP to 4'-phosphopantetheine, yielding dephospho-CoA (dPCoA) and pyrophosphate. This Shewanella halifaxensis (strain HAW-EB4) protein is Phosphopantetheine adenylyltransferase.